The following is a 1499-amino-acid chain: Autophagy-related protein 2 (1499 aa).

Positions 211–221 (EQSVPSYGSSS) are enriched in polar residues. The tract at residues 211–237 (EQSVPSYGSSSSDKEDDNTSDSEDPLS) is disordered. The segment covering 224-234 (KEDDNTSDSED) has biased composition (acidic residues).

Belongs to the ATG2 family.

It is found in the preautophagosomal structure membrane. It localises to the endoplasmic reticulum membrane. The catalysed reaction is a 1,2-diacyl-sn-glycero-3-phosphocholine(in) = a 1,2-diacyl-sn-glycero-3-phosphocholine(out). It catalyses the reaction a 1,2-diacyl-sn-glycero-3-phospho-L-serine(in) = a 1,2-diacyl-sn-glycero-3-phospho-L-serine(out). It carries out the reaction a 1,2-diacyl-sn-glycero-3-phosphoethanolamine(in) = a 1,2-diacyl-sn-glycero-3-phosphoethanolamine(out). Functionally, lipid transfer protein required for autophagosome completion and peroxisome degradation. Tethers the edge of the isolation membrane (IM) to the endoplasmic reticulum (ER) and mediates direct lipid transfer from ER to IM for IM expansion. ATG2 binds to the ER exit site (ERES), which is the membrane source for autophagosome formation, using basic residues in its N-terminal region (NR) and to the expanding edge of the IM through its C-terminal region. The latter binding is assisted by an ATG18-PtdIns3P interaction. ATG2 then extracts phospholipids from the membrane source using its NR and transfers them to ATG9 to the IM through its predicted beta-sheet-rich structure for membrane expansion. The protein is Autophagy-related protein 2 of Kluyveromyces marxianus (strain DMKU3-1042 / BCC 29191 / NBRC 104275) (Yeast).